Consider the following 275-residue polypeptide: Glutamate 5-kinase (275 aa).

Lys17 contributes to the ATP binding site. Positions 57, 144, and 160 each coordinate substrate. ATP-binding positions include 180 to 181 (SD) and 222 to 228 (TGGMLSK).

This sequence belongs to the glutamate 5-kinase family.

The protein resides in the cytoplasm. It carries out the reaction L-glutamate + ATP = L-glutamyl 5-phosphate + ADP. It functions in the pathway amino-acid biosynthesis; L-proline biosynthesis; L-glutamate 5-semialdehyde from L-glutamate: step 1/2. Its function is as follows. Catalyzes the transfer of a phosphate group to glutamate to form L-glutamate 5-phosphate. The polypeptide is Glutamate 5-kinase (Streptococcus pyogenes serotype M12 (strain MGAS2096)).